The following is a 768-amino-acid chain: DNA ligase 1 (768 aa).

The interval 42–139 is disordered; it reads VEVSQSSSDS…KEPPLESNAR (98 aa). Positions 52–99 are enriched in basic and acidic residues; sequence KNVDGRSTSEKRKVESVKLVDESKHNNHDDTGTQNVERENNIVSEAKK. Low complexity predominate over residues 104-124; the sequence is GSSSSSSDAVSSNNDSGASTP. Residues 309–318 are interaction with target DNA; it reads KLRLQLAEKT. Residue Glu-414 participates in ATP binding. The N6-AMP-lysine intermediate role is filled by Lys-416. The ATP site is built by Arg-421 and Arg-437. Residue Glu-469 coordinates Mg(2+). Residues 490 to 492 form an interaction with target DNA region; the sequence is KRK. Glu-568 contributes to the Mg(2+) binding site. The ATP site is built by Lys-573, Arg-587, and Lys-593.

This sequence belongs to the ATP-dependent DNA ligase family. Mg(2+) is required as a cofactor.

It localises to the nucleus. It carries out the reaction ATP + (deoxyribonucleotide)n-3'-hydroxyl + 5'-phospho-(deoxyribonucleotide)m = (deoxyribonucleotide)n+m + AMP + diphosphate.. DNA ligase that seals nicks in double-stranded DNA during DNA replication, DNA recombination and DNA repair. The polypeptide is DNA ligase 1 (cdc17) (Schizosaccharomyces pombe (strain 972 / ATCC 24843) (Fission yeast)).